The sequence spans 36 residues: Esculentin-2R (36 aa).

Cys30 and Cys36 are joined by a disulfide.

As to expression, expressed by the skin glands.

It localises to the secreted. In terms of biological role, antimicrobial peptide. The sequence is that of Esculentin-2R from Pelophylax ridibundus (Marsh frog).